Here is a 472-residue protein sequence, read N- to C-terminus: Spliceosome-associated protein CWC27 homolog (472 aa).

Serine 2 is subject to N-acetylserine. Positions 11–166 constitute a PPIase cyclophilin-type domain; the sequence is TNGKVLLKTT…NPHKIKSCEV (156 aa). 2 N-linked (GlcNAc...) asparagine glycosylation sites follow: asparagine 109 and asparagine 201. The stretch at 206-230 forms a coiled coil; that stretch reads SFGEEAEEEEEEVNRVSQSMKGKSK. Disordered stretches follow at residues 206-386 and 398-472; these read SFGE…DQTL and QAIA…KERR. Positions 231 to 241 are enriched in basic and acidic residues; the sequence is SSHDLLKDDPH. A compositionally biased stretch (acidic residues) spans 257–268; that stretch reads DLVDDGEDESAE. 3 stretches are compositionally biased toward basic and acidic residues: residues 269 to 286, 304 to 347, and 359 to 371; these read HDEY…ERIA, EVEK…KRSE, and EYRR…EALR. Residues 306-377 adopt a coiled-coil conformation; that stretch reads EKKSVSRSEE…EALRKQQSKK (72 aa). Serine 346 carries the phosphoserine modification. The span at 404–418 shows a compositional bias: acidic residues; that stretch reads PENDIPETEVEDDEG. Composition is skewed to basic and acidic residues over residues 425-437 and 457-472; these read QFED…KDAS and RREE…KERR.

The protein belongs to the cyclophilin-type PPIase family. In terms of assembly, part of the activated spliceosome B/catalytic step 1 spliceosome, one of the forms of the spliceosome which has a well-formed active site but still cannot catalyze the branching reaction and is composed at least of 52 proteins, the U2, U5 and U6 snRNAs and the pre-mRNA. Recruited during early steps of activated spliceosome B maturation, it is probably one of the first proteins released from this complex as he matures to the spliceosome C complex. Component of the minor spliceosome, which splices U12-type introns.

The protein localises to the nucleus. Its function is as follows. As part of the spliceosome, plays a role in pre-mRNA splicing. Probable inactive PPIase with no peptidyl-prolyl cis-trans isomerase activity. As a component of the minor spliceosome, involved in the splicing of U12-type introns in pre-mRNAs. The chain is Spliceosome-associated protein CWC27 homolog from Homo sapiens (Human).